We begin with the raw amino-acid sequence, 238 residues long: Flagellar L-ring protein (238 aa).

Residues 1–16 (MNKAILAVAMVLLLAG) form the signal peptide. Cys-17 carries the N-palmitoyl cysteine lipid modification. Residue Cys-17 is the site of S-diacylglycerol cysteine attachment.

It belongs to the FlgH family. As to quaternary structure, the basal body constitutes a major portion of the flagellar organelle and consists of four rings (L,P,S, and M) mounted on a central rod.

It is found in the cell outer membrane. It localises to the bacterial flagellum basal body. Its function is as follows. Assembles around the rod to form the L-ring and probably protects the motor/basal body from shearing forces during rotation. This is Flagellar L-ring protein from Brucella abortus (strain 2308).